The sequence spans 305 residues: Ribosomal RNA small subunit methyltransferase H (305 aa).

S-adenosyl-L-methionine contacts are provided by residues G30 to H32, D49, F74, D96, and Q103.

It belongs to the methyltransferase superfamily. RsmH family.

It is found in the cytoplasm. The enzyme catalyses cytidine(1402) in 16S rRNA + S-adenosyl-L-methionine = N(4)-methylcytidine(1402) in 16S rRNA + S-adenosyl-L-homocysteine + H(+). In terms of biological role, specifically methylates the N4 position of cytidine in position 1402 (C1402) of 16S rRNA. The chain is Ribosomal RNA small subunit methyltransferase H from Francisella tularensis subsp. tularensis (strain FSC 198).